We begin with the raw amino-acid sequence, 138 residues long: Small ribosomal subunit protein uS11c (138 aa).

Residues M1–V22 form a disordered region.

The protein belongs to the universal ribosomal protein uS11 family. In terms of assembly, part of the 30S ribosomal subunit.

It localises to the plastid. The protein is Small ribosomal subunit protein uS11c of Cuscuta reflexa (Southern Asian dodder).